Reading from the N-terminus, the 600-residue chain is Terpenoid synthase 8 (600 aa).

Residues Asp352, Asp356, Asn497, and Asp505 each contribute to the Mg(2+) site. Positions 352–356 (DDTCD) match the DDXXD motif motif.

The protein belongs to the terpene synthase family. Tpsa subfamily. It depends on Mg(2+) as a cofactor. Mn(2+) serves as cofactor. In terms of tissue distribution, stele, and tips of primary and secondary root.

The protein localises to the plastid. The catalysed reaction is (2E,6E,10E)-geranylgeranyl diphosphate = rhizathalene A + diphosphate. It functions in the pathway secondary metabolite biosynthesis; terpenoid biosynthesis. Functionally, catalyzes the synthesis of the semivolatile diterpene rhizatalene A. The protein is Terpenoid synthase 8 (TPS08) of Arabidopsis thaliana (Mouse-ear cress).